Here is a 98-residue protein sequence, read N- to C-terminus: Large ribosomal subunit protein uL23 (98 aa).

This sequence belongs to the universal ribosomal protein uL23 family. In terms of assembly, part of the 50S ribosomal subunit. Contacts protein L29, and trigger factor when it is bound to the ribosome.

Functionally, one of the early assembly proteins it binds 23S rRNA. One of the proteins that surrounds the polypeptide exit tunnel on the outside of the ribosome. Forms the main docking site for trigger factor binding to the ribosome. The sequence is that of Large ribosomal subunit protein uL23 from Methylorubrum populi (strain ATCC BAA-705 / NCIMB 13946 / BJ001) (Methylobacterium populi).